The primary structure comprises 81 residues: ATP synthase subunit c, chloroplastic (81 aa).

The next 2 helical transmembrane spans lie at proline 3–glycine 23 and leucine 57–alanine 77.

This sequence belongs to the ATPase C chain family. In terms of assembly, F-type ATPases have 2 components, F(1) - the catalytic core - and F(0) - the membrane proton channel. F(1) has five subunits: alpha(3), beta(3), gamma(1), delta(1), epsilon(1). F(0) has four main subunits: a(1), b(1), b'(1) and c(10-14). The alpha and beta chains form an alternating ring which encloses part of the gamma chain. F(1) is attached to F(0) by a central stalk formed by the gamma and epsilon chains, while a peripheral stalk is formed by the delta, b and b' chains.

Its subcellular location is the plastid. It is found in the chloroplast thylakoid membrane. In terms of biological role, f(1)F(0) ATP synthase produces ATP from ADP in the presence of a proton or sodium gradient. F-type ATPases consist of two structural domains, F(1) containing the extramembraneous catalytic core and F(0) containing the membrane proton channel, linked together by a central stalk and a peripheral stalk. During catalysis, ATP synthesis in the catalytic domain of F(1) is coupled via a rotary mechanism of the central stalk subunits to proton translocation. Its function is as follows. Key component of the F(0) channel; it plays a direct role in translocation across the membrane. A homomeric c-ring of between 10-14 subunits forms the central stalk rotor element with the F(1) delta and epsilon subunits. In Welwitschia mirabilis (Tree tumbo), this protein is ATP synthase subunit c, chloroplastic.